The sequence spans 860 residues: Leucine--tRNA ligase (860 aa).

Residues 42-52 (PYPSGRLHMGH) carry the 'HIGH' region motif. The short motif at 619–623 (KMSKS) is the 'KMSKS' region element. Residue Lys-622 participates in ATP binding.

The protein belongs to the class-I aminoacyl-tRNA synthetase family.

It is found in the cytoplasm. The catalysed reaction is tRNA(Leu) + L-leucine + ATP = L-leucyl-tRNA(Leu) + AMP + diphosphate. The sequence is that of Leucine--tRNA ligase from Mannheimia succiniciproducens (strain KCTC 0769BP / MBEL55E).